A 55-amino-acid polypeptide reads, in one-letter code: Protein CADMIUM TOLERANCE 1 (55 aa).

The chain crosses the membrane as a helical span at residues 24–40 (GCLYACIFTALCCFCCY).

This sequence belongs to the CYSTM1 family.

The protein resides in the cell membrane. It localises to the secreted. It is found in the cell wall. Functionally, confers resistance to heavy metal ions (e.g. cadmium (CdCl(2)) and copper (CuCl(2))) by chelating them at the plasma membrane of root cells, thus stopping their entry and reducing their accumulation. Binds to aluminium (Al). The chain is Protein CADMIUM TOLERANCE 1 from Oryza sativa subsp. indica (Rice).